Reading from the N-terminus, the 310-residue chain is O-acetylserine sulfhydrylase (310 aa).

An N6-(pyridoxal phosphate)lysine modification is found at Lys-44. Pyridoxal 5'-phosphate contacts are provided by residues Asn-74, 178–182 (GTGGT), and Ser-266.

Belongs to the cysteine synthase/cystathionine beta-synthase family. In terms of assembly, homodimer. Pyridoxal 5'-phosphate is required as a cofactor.

The catalysed reaction is O-acetyl-L-serine + hydrogen sulfide = L-cysteine + acetate. It participates in amino-acid biosynthesis; L-cysteine biosynthesis; L-cysteine from L-serine: step 2/2. In terms of biological role, catalyzes the conversion of O-acetylserine (OAS) to cysteine through the elimination of acetate and addition of hydrogen sulfide. This chain is O-acetylserine sulfhydrylase (cysK), found in Mycobacterium bovis (strain ATCC BAA-935 / AF2122/97).